A 98-amino-acid chain; its full sequence is Nucleoid-associated protein pc0477 (98 aa).

The protein belongs to the YbaB/EbfC family. Homodimer.

It is found in the cytoplasm. The protein localises to the nucleoid. Its function is as follows. Binds to DNA and alters its conformation. May be involved in regulation of gene expression, nucleoid organization and DNA protection. In Protochlamydia amoebophila (strain UWE25), this protein is Nucleoid-associated protein pc0477.